The sequence spans 469 residues: Argininosuccinate lyase (469 aa).

It belongs to the lyase 1 family. Argininosuccinate lyase subfamily.

Its subcellular location is the cytoplasm. The catalysed reaction is 2-(N(omega)-L-arginino)succinate = fumarate + L-arginine. Its pathway is amino-acid biosynthesis; L-arginine biosynthesis; L-arginine from L-ornithine and carbamoyl phosphate: step 3/3. In Mycolicibacterium smegmatis (strain ATCC 700084 / mc(2)155) (Mycobacterium smegmatis), this protein is Argininosuccinate lyase.